Consider the following 1008-residue polypeptide: Probable beta-galactosidase B (1008 aa).

The N-terminal stretch at 1–18 (MLLQSLFAWALAIGPCIA) is a signal peptide. Residues Asn20 and Asn23 are each glycosylated (N-linked (GlcNAc...) asparagine). Tyr87 lines the substrate pocket. Asn108 carries N-linked (GlcNAc...) asparagine glycosylation. Substrate is bound by residues Asn132, Ala133, Glu134, and Asn192. Residue Glu193 is the Proton donor of the active site. Asn208 is a glycosylation site (N-linked (GlcNAc...) asparagine). Tyr262 lines the substrate pocket. Cys268 and Cys321 are oxidised to a cystine. Asn269 carries an N-linked (GlcNAc...) asparagine glycan. Glu305 acts as the Nucleophile in catalysis. Substrate is bound at residue Tyr370. N-linked (GlcNAc...) asparagine glycosylation is found at Asn453, Asn594, Asn624, Asn681, Asn703, Asn782, Asn788, Asn816, Asn826, and Asn879.

It belongs to the glycosyl hydrolase 35 family.

The protein resides in the secreted. It catalyses the reaction Hydrolysis of terminal non-reducing beta-D-galactose residues in beta-D-galactosides.. Its function is as follows. Cleaves beta-linked terminal galactosyl residues from gangliosides, glycoproteins, and glycosaminoglycans. This chain is Probable beta-galactosidase B (lacB), found in Sclerotinia sclerotiorum (strain ATCC 18683 / 1980 / Ss-1) (White mold).